The following is a 227-amino-acid chain: PKHD-type hydroxylase Mfla_2317 (227 aa).

Positions 78-178 (KVFPPLFNRY…RVSSFFWMQS (101 aa)) constitute a Fe2OG dioxygenase domain. Residues His-96, Asp-98, and His-159 each coordinate Fe cation. Arg-169 contacts 2-oxoglutarate.

Requires Fe(2+) as cofactor. The cofactor is L-ascorbate.

In Methylobacillus flagellatus (strain ATCC 51484 / DSM 6875 / VKM B-1610 / KT), this protein is PKHD-type hydroxylase Mfla_2317.